We begin with the raw amino-acid sequence, 194 residues long: Inner membrane-spanning protein YciB (194 aa).

Helical transmembrane passes span 1–21 (MKLL…KTTN), 49–69 (EKMH…TILF), 77–97 (WKPS…GWVS), 120–140 (LNYS…YVAY), and 150–170 (FKLF…GVYI).

It belongs to the YciB family.

Its subcellular location is the cell inner membrane. Plays a role in cell envelope biogenesis, maintenance of cell envelope integrity and membrane homeostasis. This Hahella chejuensis (strain KCTC 2396) protein is Inner membrane-spanning protein YciB.